A 306-amino-acid polypeptide reads, in one-letter code: MPSHADLDRQISQLRECKFLGEAEVRALCEQAKAILMEEWNVQPVRCPVTVCGDIHGQFYDLIELFRIGGDSPDTNYLFMGDYVDRGYYSVETVTLLVALKVRYRDRITILRGNHESRQITQVYGFYDECLRKYGNANVWKYFTDLFDYLPLTALVENQVFCLHGGLSPSLDTLDNIRALDRIQEVPHEGPMCDLLWSDPDDRCGWGISPRGAGYTFGQDIAQQFNHTNGLTLISRAHQLVMEGFNWCQDKNVVTVFSAPNYCYRCGNMAAILEIGENMDQNFLQFDPAPRQIEPDTTRKTPDYFL.

Residues Asp-54, His-56, Asp-82, and Asn-114 each coordinate Mn(2+). His-115 acts as the Proton donor in catalysis. The Mn(2+) site is built by His-164 and His-238.

It belongs to the PPP phosphatase family. PP-2A subfamily. Mn(2+) is required as a cofactor.

The protein localises to the cytoplasm. It carries out the reaction O-phospho-L-seryl-[protein] + H2O = L-seryl-[protein] + phosphate. The catalysed reaction is O-phospho-L-threonyl-[protein] + H2O = L-threonyl-[protein] + phosphate. In Oryza sativa subsp. indica (Rice), this protein is Serine/threonine-protein phosphatase PP2A-1 catalytic subunit (PP2A1).